Consider the following 199-residue polypeptide: Proteasome subunit beta type-2-B (199 aa).

M1 carries the post-translational modification N-acetylmethionine.

It belongs to the peptidase T1B family. In terms of assembly, component of the 20S core complex of the 26S proteasome. The 26S proteasome is composed of a core protease (CP), known as the 20S proteasome, capped at one or both ends by the 19S regulatory particle (RP/PA700). The 20S proteasome core is composed of 28 subunits that are arranged in four stacked rings, resulting in a barrel-shaped structure. The two end rings are each formed by seven alpha subunits, and the two central rings are each formed by seven beta subunits. The catalytic chamber with the active sites is on the inside of the barrel. In terms of tissue distribution, ubiquitous low levels, higher expression in siliques and flowers.

It is found in the cytoplasm. The protein resides in the nucleus. Non-catalytic component of the proteasome, a multicatalytic proteinase complex which is characterized by its ability to cleave peptides with Arg, Phe, Tyr, Leu, and Glu adjacent to the leaving group at neutral or slightly basic pH. The proteasome has an ATP-dependent proteolytic activity. In Arabidopsis thaliana (Mouse-ear cress), this protein is Proteasome subunit beta type-2-B (PBD2).